Here is a 137-residue protein sequence, read N- to C-terminus: Large ribosomal subunit protein bL17 (137 aa).

It belongs to the bacterial ribosomal protein bL17 family. In terms of assembly, part of the 50S ribosomal subunit. Contacts protein L32.

In Bradyrhizobium sp. (strain BTAi1 / ATCC BAA-1182), this protein is Large ribosomal subunit protein bL17.